The chain runs to 253 residues: Uracil-DNA glycosylase (253 aa).

Asp79 serves as the catalytic Proton acceptor.

The protein belongs to the uracil-DNA glycosylase (UDG) superfamily. UNG family.

The protein localises to the cytoplasm. It catalyses the reaction Hydrolyzes single-stranded DNA or mismatched double-stranded DNA and polynucleotides, releasing free uracil.. Its function is as follows. Excises uracil residues from the DNA which can arise as a result of misincorporation of dUMP residues by DNA polymerase or due to deamination of cytosine. The chain is Uracil-DNA glycosylase from Xylella fastidiosa (strain 9a5c).